Consider the following 109-residue polypeptide: Large ribosomal subunit protein uL22 (109 aa).

This sequence belongs to the universal ribosomal protein uL22 family. Part of the 50S ribosomal subunit.

Functionally, this protein binds specifically to 23S rRNA; its binding is stimulated by other ribosomal proteins, e.g. L4, L17, and L20. It is important during the early stages of 50S assembly. It makes multiple contacts with different domains of the 23S rRNA in the assembled 50S subunit and ribosome. Its function is as follows. The globular domain of the protein is located near the polypeptide exit tunnel on the outside of the subunit, while an extended beta-hairpin is found that lines the wall of the exit tunnel in the center of the 70S ribosome. The sequence is that of Large ribosomal subunit protein uL22 from Blochmanniella pennsylvanica (strain BPEN).